The primary structure comprises 177 residues: Prorelaxin (177 aa).

Positions 1 to 22 (MSCKFVLQLLGFWLLLSQPCRA) are cleaved as a signal peptide. Disulfide bonds link C36–C164, C48–C177, and C163–C168. Positions 64-149 (MTEEAVSSFI…LKSLYLDTLS (86 aa)) are cleaved as a propeptide — connecting peptide. A disordered region spans residues 80–114 (FDTMPNLSEKPKTALPEGHPSLPEQQQYVPVSSDS). Residues 102–114 (PEQQQYVPVSSDS) show a composition bias toward polar residues.

This sequence belongs to the insulin family. In terms of assembly, heterodimer of a B chain and an A chain linked by two disulfide bonds.

It localises to the secreted. Relaxin is an ovarian hormone that acts with estrogen to produce dilatation of the birth canal in many mammals. It bears mature young, and allows separation of the pelvic bones. The protein is Prorelaxin (RLN) of Mesocricetus auratus (Golden hamster).